Reading from the N-terminus, the 290-residue chain is ATP synthase gamma chain (290 aa).

The protein belongs to the ATPase gamma chain family. In terms of assembly, F-type ATPases have 2 components, CF(1) - the catalytic core - and CF(0) - the membrane proton channel. CF(1) has five subunits: alpha(3), beta(3), gamma(1), delta(1), epsilon(1). CF(0) has three main subunits: a, b and c.

Its subcellular location is the cell inner membrane. Its function is as follows. Produces ATP from ADP in the presence of a proton gradient across the membrane. The gamma chain is believed to be important in regulating ATPase activity and the flow of protons through the CF(0) complex. In Desulfotalea psychrophila (strain LSv54 / DSM 12343), this protein is ATP synthase gamma chain.